A 293-amino-acid polypeptide reads, in one-letter code: GPN-loop GTPase 3 (293 aa).

13–18 contacts GTP; that stretch reads GAGKST. A Gly-Pro-Asn (GPN)-loop; involved in dimer interface motif is present at residues 70–72; sequence GPN. Position 176–179 (176–179) interacts with GTP; sequence SKMD. Positions 272-281 are enriched in basic and acidic residues; it reads HEAQEPREPN. The segment at 272–293 is disordered; it reads HEAQEPREPNDEQDVDYEDADI. Over residues 282-293 the composition is skewed to acidic residues; sequence DEQDVDYEDADI.

It belongs to the GPN-loop GTPase family. As to quaternary structure, heterodimers with gpn1 or gpn2. Binds to RNA polymerase II (RNAPII).

Its function is as follows. Small GTPase required for proper nuclear import of RNA polymerase II and III (RNAPII and RNAPIII). May act at an RNAP assembly step prior to nuclear import. The sequence is that of GPN-loop GTPase 3 from Aspergillus fumigatus (strain ATCC MYA-4609 / CBS 101355 / FGSC A1100 / Af293) (Neosartorya fumigata).